A 99-amino-acid polypeptide reads, in one-letter code: Aspartyl/glutamyl-tRNA(Asn/Gln) amidotransferase subunit C (99 aa).

The protein belongs to the GatC family. Heterotrimer of A, B and C subunits.

The catalysed reaction is L-glutamyl-tRNA(Gln) + L-glutamine + ATP + H2O = L-glutaminyl-tRNA(Gln) + L-glutamate + ADP + phosphate + H(+). The enzyme catalyses L-aspartyl-tRNA(Asn) + L-glutamine + ATP + H2O = L-asparaginyl-tRNA(Asn) + L-glutamate + ADP + phosphate + 2 H(+). Functionally, allows the formation of correctly charged Asn-tRNA(Asn) or Gln-tRNA(Gln) through the transamidation of misacylated Asp-tRNA(Asn) or Glu-tRNA(Gln) in organisms which lack either or both of asparaginyl-tRNA or glutaminyl-tRNA synthetases. The reaction takes place in the presence of glutamine and ATP through an activated phospho-Asp-tRNA(Asn) or phospho-Glu-tRNA(Gln). The protein is Aspartyl/glutamyl-tRNA(Asn/Gln) amidotransferase subunit C of Kineococcus radiotolerans (strain ATCC BAA-149 / DSM 14245 / SRS30216).